The following is a 429-amino-acid chain: Serine--tRNA ligase (429 aa).

Position 236-238 (236-238) interacts with L-serine; sequence TAE. Position 267–269 (267–269) interacts with ATP; sequence RSE. Glu-290 is an L-serine binding site. 354-357 contacts ATP; that stretch reads EISS. Position 390 (Ser-390) interacts with L-serine.

It belongs to the class-II aminoacyl-tRNA synthetase family. Type-1 seryl-tRNA synthetase subfamily. In terms of assembly, homodimer. The tRNA molecule binds across the dimer.

The protein resides in the cytoplasm. The catalysed reaction is tRNA(Ser) + L-serine + ATP = L-seryl-tRNA(Ser) + AMP + diphosphate + H(+). It catalyses the reaction tRNA(Sec) + L-serine + ATP = L-seryl-tRNA(Sec) + AMP + diphosphate + H(+). Its pathway is aminoacyl-tRNA biosynthesis; selenocysteinyl-tRNA(Sec) biosynthesis; L-seryl-tRNA(Sec) from L-serine and tRNA(Sec): step 1/1. Functionally, catalyzes the attachment of serine to tRNA(Ser). Is also able to aminoacylate tRNA(Sec) with serine, to form the misacylated tRNA L-seryl-tRNA(Sec), which will be further converted into selenocysteinyl-tRNA(Sec). The chain is Serine--tRNA ligase from Photorhabdus laumondii subsp. laumondii (strain DSM 15139 / CIP 105565 / TT01) (Photorhabdus luminescens subsp. laumondii).